The chain runs to 411 residues: 2,3-bisphosphoglycerate-independent phosphoglycerate mutase (411 aa).

The protein belongs to the BPG-independent phosphoglycerate mutase family. A-PGAM subfamily.

The enzyme catalyses (2R)-2-phosphoglycerate = (2R)-3-phosphoglycerate. It participates in carbohydrate degradation; glycolysis; pyruvate from D-glyceraldehyde 3-phosphate: step 3/5. Its function is as follows. Catalyzes the interconversion of 2-phosphoglycerate and 3-phosphoglycerate. The protein is 2,3-bisphosphoglycerate-independent phosphoglycerate mutase of Thermococcus kodakarensis (strain ATCC BAA-918 / JCM 12380 / KOD1) (Pyrococcus kodakaraensis (strain KOD1)).